The chain runs to 209 residues: MILNDLGVVDYAAAFSLQERIADGVYRNATPETLLLLEHHPVYTIGRAGCEENILDHSIQAIRISRGGDVTFHGPGQLVGYPLINLRPRGCDLRHYLRFLEELLISVVADFGVSAFRVPGKTGVWTDQGKLAAIGVGVRHWVTMHGFAMNVNNDLSSFERINPCGIATCPIASLERLCGCPIAMDEVKSRVAGRFQGLLDEWLPAAGAL.

In terms of domain architecture, BPL/LPL catalytic spans 28–203 (NATPETLLLL…RFQGLLDEWL (176 aa)). Substrate-binding positions include 66–73 (RGGDVTFH), 133–135 (AIG), and 146–148 (GFA). Cys-164 functions as the Acyl-thioester intermediate in the catalytic mechanism.

Belongs to the LipB family.

The protein localises to the cytoplasm. The catalysed reaction is octanoyl-[ACP] + L-lysyl-[protein] = N(6)-octanoyl-L-lysyl-[protein] + holo-[ACP] + H(+). It functions in the pathway protein modification; protein lipoylation via endogenous pathway; protein N(6)-(lipoyl)lysine from octanoyl-[acyl-carrier-protein]: step 1/2. Catalyzes the transfer of endogenously produced octanoic acid from octanoyl-acyl-carrier-protein onto the lipoyl domains of lipoate-dependent enzymes. Lipoyl-ACP can also act as a substrate although octanoyl-ACP is likely to be the physiological substrate. The polypeptide is Octanoyltransferase (Pelobacter propionicus (strain DSM 2379 / NBRC 103807 / OttBd1)).